A 347-amino-acid polypeptide reads, in one-letter code: Homoisocitrate dehydrogenase (347 aa).

68 to 70 (ITS) lines the NADH pocket. Residue serine 70 coordinates (2R,3S)-homoisocitrate. Phosphoserine is present on serine 81. (2R,3S)-homoisocitrate is bound by residues arginine 87, arginine 97, arginine 128, tyrosine 135, lysine 181, and asparagine 183. Asparagine 183 is an NADH binding site. Residues aspartate 213, aspartate 237, and aspartate 241 each coordinate Mg(2+). Residues 270–274 (GSAPD) and asparagine 282 each bind NADH.

It belongs to the isocitrate and isopropylmalate dehydrogenases family. It depends on Mg(2+) as a cofactor.

The catalysed reaction is (2R,3S)-homoisocitrate + NAD(+) = 2-oxoadipate + CO2 + NADH. The enzyme catalyses (2R,3S)-iso(homo)2citrate + NAD(+) = 2-oxoheptanedioate + CO2 + NADH. It carries out the reaction (2R,3S)-iso(homo)3citrate + NAD(+) = 2-oxosuberate + CO2 + NADH. Its pathway is organic acid metabolism; 2-oxosuberate biosynthesis. In terms of biological role, catalyzes the NAD-dependent oxidation and decarboxylation of (2R,3S)-homoisocitrate, (2R,3S)-homo(2)-isocitrate and (2R,3S)-homo(3)-isocitrate, into 2-oxoadipate, 2-oxopimelate (2-oxoheptanedioate), and 2-oxosuberate, respectively. All these substrates are intermediates in the biosynthesis of biotin and of 7-mercaptoheptanoate, a moiety of coenzyme B in methanoarchaea. Is also able to produce 2-oxoazelate from (2R,3S)-homo(4)-isocitrate in vitro, but this substrate is probably not physiologically relevant. Is unable to use any isomer of isocitrate or isopropylmalate as a substrate, and NADP as an oxidant. The chain is Homoisocitrate dehydrogenase (aksF) from Methanocaldococcus jannaschii (strain ATCC 43067 / DSM 2661 / JAL-1 / JCM 10045 / NBRC 100440) (Methanococcus jannaschii).